We begin with the raw amino-acid sequence, 88 residues long: UPF0367 protein Synpcc7942_1638 (88 aa).

It belongs to the UPF0367 family.

The polypeptide is UPF0367 protein Synpcc7942_1638 (Synechococcus elongatus (strain ATCC 33912 / PCC 7942 / FACHB-805) (Anacystis nidulans R2)).